Consider the following 462-residue polypeptide: Proline--tRNA ligase (462 aa).

The protein belongs to the class-II aminoacyl-tRNA synthetase family. ProS type 3 subfamily. As to quaternary structure, homodimer.

It is found in the cytoplasm. It catalyses the reaction tRNA(Pro) + L-proline + ATP = L-prolyl-tRNA(Pro) + AMP + diphosphate. Functionally, catalyzes the attachment of proline to tRNA(Pro) in a two-step reaction: proline is first activated by ATP to form Pro-AMP and then transferred to the acceptor end of tRNA(Pro). This chain is Proline--tRNA ligase, found in Thermoplasma acidophilum (strain ATCC 25905 / DSM 1728 / JCM 9062 / NBRC 15155 / AMRC-C165).